The following is a 243-amino-acid chain: Venom nerve growth factor 1 (243 aa).

A signal peptide spans 1–18 (MSMLCYTLIIAFLIGIWA). The propeptide occupies 19–125 (APKSEDNVPL…TLNRNIRAKR (107 aa)). Residues 47–66 (GLKTSRNTDQRHPAPKKAED) are compositionally biased toward basic and acidic residues. The segment at 47-69 (GLKTSRNTDQRHPAPKKAEDQEL) is disordered. Cystine bridges form between Cys-139/Cys-204, Cys-182/Cys-232, and Cys-192/Cys-234. N-linked (GlcNAc...) asparagine glycosylation occurs at Asn-148.

It belongs to the NGF-beta family. In terms of assembly, homodimer; non-covalently linked. As to expression, expressed by the venom gland.

The protein localises to the secreted. Nerve growth factor is important for the development and maintenance of the sympathetic and sensory nervous systems. It stimulates division and differentiation of sympathetic and embryonic sensory neurons as well as basal forebrain cholinergic neurons in the brain. Its relevance in the snake venom is not clear. However, it has been shown to inhibit metalloproteinase-dependent proteolysis of platelet glycoprotein Ib alpha, suggesting a metalloproteinase inhibition to prevent metalloprotease autodigestion and/or protection against prey proteases. Binds a lipid between the two protein chains in the homodimer. The lipid-bound form promotes histamine relase from mouse mast cells, contrary to the lipid-free form. In Oxyuranus microlepidotus (Inland taipan), this protein is Venom nerve growth factor 1.